Reading from the N-terminus, the 504-residue chain is ATP synthase subunit alpha, chloroplastic (504 aa).

ATP is bound at residue 170 to 177 (GDRQTGKT). Threonine 257 is subject to Phosphothreonine.

Belongs to the ATPase alpha/beta chains family. As to quaternary structure, F-type ATPases have 2 components, CF(1) - the catalytic core - and CF(0) - the membrane proton channel. CF(1) has five subunits: alpha(3), beta(3), gamma(1), delta(1), epsilon(1). CF(0) has four main subunits: a, b, b' and c.

The protein resides in the plastid. It localises to the chloroplast thylakoid membrane. The enzyme catalyses ATP + H2O + 4 H(+)(in) = ADP + phosphate + 5 H(+)(out). In terms of biological role, produces ATP from ADP in the presence of a proton gradient across the membrane. The alpha chain is a regulatory subunit. This Nasturtium officinale (Watercress) protein is ATP synthase subunit alpha, chloroplastic.